The chain runs to 56 residues: MATWICWPNNAYIDACTFIVVIILIHLIELNIHLQWVKESLNFAMENGDKEDSDNE.

This is an uncharacterized protein from Autographa californica nuclear polyhedrosis virus (AcMNPV).